A 958-amino-acid polypeptide reads, in one-letter code: Isoleucine--tRNA ligase (958 aa).

Residues M1 to G32 are disordered. The 'HIGH' region motif lies at P71–H81. E590 serves as a coordination point for L-isoleucyl-5'-AMP. Residues K631–S635 carry the 'KMSKS' region motif. Residue K634 coordinates ATP. Zn(2+) is bound by residues C921, C924, C941, and C944.

The protein belongs to the class-I aminoacyl-tRNA synthetase family. IleS type 1 subfamily. Monomer. Zn(2+) is required as a cofactor.

It is found in the cytoplasm. It catalyses the reaction tRNA(Ile) + L-isoleucine + ATP = L-isoleucyl-tRNA(Ile) + AMP + diphosphate. Functionally, catalyzes the attachment of isoleucine to tRNA(Ile). As IleRS can inadvertently accommodate and process structurally similar amino acids such as valine, to avoid such errors it has two additional distinct tRNA(Ile)-dependent editing activities. One activity is designated as 'pretransfer' editing and involves the hydrolysis of activated Val-AMP. The other activity is designated 'posttransfer' editing and involves deacylation of mischarged Val-tRNA(Ile). In Janthinobacterium sp. (strain Marseille) (Minibacterium massiliensis), this protein is Isoleucine--tRNA ligase.